We begin with the raw amino-acid sequence, 215 residues long: RNA pyrophosphohydrolase (215 aa).

The region spanning 6–149 (GFRPNVGIIL…KRDVYQLALT (144 aa)) is the Nudix hydrolase domain. A Nudix box motif is present at residues 38–59 (GGIKYGETPMQAMYRELHEETG).

The protein belongs to the Nudix hydrolase family. RppH subfamily. Requires a divalent metal cation as cofactor.

Its function is as follows. Accelerates the degradation of transcripts by removing pyrophosphate from the 5'-end of triphosphorylated RNA, leading to a more labile monophosphorylated state that can stimulate subsequent ribonuclease cleavage. The chain is RNA pyrophosphohydrolase from Burkholderia multivorans (strain ATCC 17616 / 249).